Consider the following 208-residue polypeptide: Guanylate kinase (208 aa).

A Guanylate kinase-like domain is found at 4–181 (GLLIVISGPS…AVEKIQSIIS (178 aa)). ATP is bound at residue 11 to 18 (GPSGTGKG).

It belongs to the guanylate kinase family.

It localises to the cytoplasm. The catalysed reaction is GMP + ATP = GDP + ADP. In terms of biological role, essential for recycling GMP and indirectly, cGMP. In Clostridium tetani (strain Massachusetts / E88), this protein is Guanylate kinase.